The sequence spans 209 residues: Small ribosomal subunit protein eS1 (209 aa).

This sequence belongs to the eukaryotic ribosomal protein eS1 family.

The chain is Small ribosomal subunit protein eS1 from Picrophilus torridus (strain ATCC 700027 / DSM 9790 / JCM 10055 / NBRC 100828 / KAW 2/3).